The sequence spans 259 residues: MIEINNKIDYIFYTNNTPNTYKIQLILLELQKEYGITFESRFINVFKKENYSDDYIKINPNKKVPAIVDQTGEKPFIVFESVSILIYLAQKFNTFLPDFKTNPLENSEVITWTVWQAANLGPAFGQYFHFSFFSPTVQEYSLHRFNNEAQRILRLLDDRLSSTYIGGNEFSIADIASAGWLLYLNSAPLYNATKERFPNIFKWLDLINQRESIKQVNQSISDGFKNFNPSLLRALFTNDPELINAKAPIGIENVILKYD.

Positions 7-96 (KIDYIFYTNN…YLAQKFNTFL (90 aa)) constitute a GST N-terminal domain. In terms of domain architecture, GST C-terminal spans 102-232 (NPLENSEVIT…GFKNFNPSLL (131 aa)).

Belongs to the GST superfamily.

This Dictyostelium discoideum (Social amoeba) protein is Glutathione S-transferase domain-containing protein DDB_G0274705.